A 367-amino-acid polypeptide reads, in one-letter code: Probable thylakoidal processing peptidase 2, chloroplastic (367 aa).

A chloroplast-targeting transit peptide spans 1-68 (MAIRVTFTYS…NTWGPSSGPR (68 aa)). The tract at residues 53-72 (DKSPGSNTWGPSSGPRARPA) is disordered. Residues 62–72 (GPSSGPRARPA) show a composition bias toward low complexity. Residues 185-205 (EDAKAAFTAVTVSLLFRSALA) traverse the membrane as a helical segment. Residues 206-367 (EPKSIPSTSM…VSQKRAVDVS (162 aa)) lie on the Lumenal, thylakoid side of the membrane. Serine 214 is an active-site residue.

This sequence belongs to the peptidase S26 family.

The protein localises to the plastid. Its subcellular location is the chloroplast thylakoid membrane. It catalyses the reaction Cleavage of hydrophobic, N-terminal signal or leader sequences from secreted and periplasmic proteins.. In terms of biological role, cleaves the thylakoid-transfer domain from a chloroplast protein. The protein is Probable thylakoidal processing peptidase 2, chloroplastic (TPP2) of Arabidopsis thaliana (Mouse-ear cress).